Here is a 294-residue protein sequence, read N- to C-terminus: UPF0761 membrane protein YPN_0254 (294 aa).

The next 7 membrane-spanning stretches (helical) occupy residues 44–64 (LLSLVPLITVIFALFAAFPMF), 67–87 (ISIKLKAFIFANFMPATGDII), 108–128 (GLIVTALLLIYSVDSVLNIIW), 136–156 (LVFSFAVYWMVLTLGPILVGA), 185–205 (VFPLLISWVSFWLLYSVVPTV), 212–232 (ALIGALVAALLFELGKKGFAM), and 246–266 (VLAVIPILFLWVYWSWCIVLL).

It belongs to the UPF0761 family.

Its subcellular location is the cell inner membrane. This chain is UPF0761 membrane protein YPN_0254, found in Yersinia pestis bv. Antiqua (strain Nepal516).